Consider the following 943-residue polypeptide: Coiled-coil and C2 domain-containing protein 1A (943 aa).

Threonine 91 carries the phosphothreonine modification. Disordered stretches follow at residues 186–250 (NEAD…CSPL) and 300–337 (DLSR…VPQP). Composition is skewed to low complexity over residues 195–206 (ASGKGAAAGHSH) and 229–238 (APSTTTPTSA). At serine 248 the chain carries Phosphoserine. Over residues 304 to 319 (LPPPPDQLSPEPPLPA) the composition is skewed to pro residues. A coiled-coil region spans residues 339–385 (RNLLEALEQRMERYHVAAAQAKAKGDQRKARMHERIVKQYQDAIRAH). The tract at residues 430–483 (NHDEGSDDEEEETPKKQNTPAASTTQLKSSPSKAPPSGPAPAGKAAPKGTSNRA) is disordered. At serine 435 the chain carries Phosphoserine. Residues 445–456 (KQNTPAASTTQL) show a composition bias toward polar residues. Over residues 469–478 (APAGKAAPKG) the composition is skewed to low complexity. Residues 477 to 510 (KGTSNRAQQQLAFLEGRKKQLLQAALRAKQKNDV) are a coiled coil. Residues 630–764 (RFEQRTFSVI…ETACEVHEIL (135 aa)) form the C2 domain.

Belongs to the CC2D1 family. Highly expressed in brain, expression is enriched in the gray matter and strongest in the olfactory bulb.

Its subcellular location is the cytoplasm. The protein resides in the nucleus. It is found in the cytoskeleton. It localises to the microtubule organizing center. The protein localises to the centrosome. In terms of biological role, transcription factor that binds specifically to the DRE (dual repressor element) and represses HTR1A gene transcription in neuronal cells. The combination of calcium and ATP specifically inactivates the binding with FRE. May play a role in the altered regulation of HTR1A associated with anxiety and major depression. Mediates HDAC-independent repression of HTR1A promoter in neuronal cell. Performs essential function in controlling functional maturation of synapses. This chain is Coiled-coil and C2 domain-containing protein 1A (Cc2d1a), found in Mus musculus (Mouse).